The chain runs to 1576 residues: ABC transporter ALT5 (1576 aa).

10 consecutive transmembrane segments (helical) span residues 27 to 47, 72 to 92, 99 to 119, 267 to 287, 289 to 309, 321 to 341, 387 to 407, 417 to 437, 500 to 520, and 525 to 545; these read LKFE…ILAV, ILGF…TQGT, GLFL…VIVC, LPLS…PILP, LVLI…TGFL, GLIG…SLYW, VLAG…AVIV, GFFA…ATVG, ITAM…TLAA, and VATS…APLG. Residues 289–556 enclose the ABC transmembrane type-1 1 domain; it reads LVLIGLSISQ…LFQSVAPLMS (268 aa). The 233-residue stretch at 602–834 folds into the ABC transporter 1 domain; the sequence is FRVVNGSFRW…NGGYLQSLCV (233 aa). 636–643 is a binding site for ATP; it reads GPVGSGKS. 7 consecutive transmembrane segments (helical) span residues 915 to 935, 957 to 977, 981 to 1001, 1035 to 1054, 1060 to 1078, 1142 to 1162, and 1171 to 1191; these read VVAL…FAFP, FWVG…FLTM, VTSI…AAIM, LIQF…VLAA, AAMY…KLYL, WLLF…VTLV, and GFAG…ASAM. In terms of domain architecture, ABC transmembrane type-1 2 spans 919 to 1199; sequence VAFLASAICY…AMQSYAKLET (281 aa). The ABC transporter 2 domain occupies 1236–1567; the sequence is IKLDGVSASY…SHSKFRALCE (332 aa). ATP is bound at residue 1278–1285; that stretch reads GRSGSGKS.

The protein belongs to the ABC transporter superfamily. ABCC family. Conjugate transporter (TC 3.A.1.208) subfamily.

The protein localises to the cell membrane. In terms of biological role, ABC transporter that may provide the dual role AAL-toxin export and self-protection by allowing the fungus to evade the harmful effect of its own AAL-toxin production. The polypeptide is ABC transporter ALT5 (Alternaria alternata (Alternaria rot fungus)).